The sequence spans 421 residues: uncharacterized protein (421 aa).

4 consecutive CBS domains span residues 13-74 (MTKD…VRSL), 74-133 (LMYK…MKDT), 139-195 (MTRN…PKKK), and 217-274 (MNTP…KGAM).

This is an uncharacterized protein from Methanocaldococcus jannaschii (strain ATCC 43067 / DSM 2661 / JAL-1 / JCM 10045 / NBRC 100440) (Methanococcus jannaschii).